Consider the following 117-residue polypeptide: Large ribosomal subunit protein bL20 (117 aa).

It belongs to the bacterial ribosomal protein bL20 family.

In terms of biological role, binds directly to 23S ribosomal RNA and is necessary for the in vitro assembly process of the 50S ribosomal subunit. It is not involved in the protein synthesizing functions of that subunit. The polypeptide is Large ribosomal subunit protein bL20 (Crocosphaera subtropica (strain ATCC 51142 / BH68) (Cyanothece sp. (strain ATCC 51142))).